Here is a 1713-residue protein sequence, read N- to C-terminus: MSAKVRLKKLEQLLLDGPWRNDSALSVETLLDVLVCLYTECSHSALRRDKYVAEFLEWAKPFTQLVKDMQLHREDFEIIKVIGRGAFGEVAVVKMKNTERIYAMKILNKWEMLKRAETACFREERDVLVNGDCQWITALHYAFQDENYLYLVMDYYVGGDLLTLLSKFEDKLPEDMARFYIGEMVLAIDSIHQLHYVHRDIKPDNVLLDVNGHIRLADFGSCLKMNDDGTVQSSVAVGTPDYISPEILQAMEDGMGKYGPECDWWSLGVCMYEMLYGETPFYAESLVETYGKIMNHEERFQFPSHVTDVSEEAKDLIQRLICSRERRLGQNGIEDFKKHAFFEGLNWENIRNLEAPYIPDVSSPSDTSNFDVDDDMLRNIEILPPGSHTGFSGLHLPFIGFTFTTESCFSDRGSLKSMTQSNTLTKDEDVQRDLENSLQIEAYERRIRRLEQEKLELSRKLQESTQTVQSLHGSTRALGNSNRDKEIKRLNEELERMKSKMADSNRLERQLEDTVTLRQEHEDSTHRLKGLEKQYRLARQEKEELHKQLVEASERLKSQTKELKDAHQQRKRALQEFSELNERMSELRSLKQKVSRQLRDKEEEMEVAMQKIDSMRQDLRKSEKSRKELEARLEDAAAEASKERKLREHSESFCKQMERELEALKVKQGGRGPGAASEHQQEISKIRSELEKKVLFYEEELVRREASHVLEVKNVKKEVHDSESHQLALQKEVLMLKDKLEKSKRERHSEMEEAIGTVKDKYERERAMLFDENKKLTAENEKLCSFVDKLTAQNRQLEDELQDLASKKESVAHWEAQIAEIIQWVSDEKDARGYLQALASKMTEELETLRSSSLGSRTLDPLWKVRRSQKLDMSARLELQSALEAEIRAKQLVQEELRKVKDSSLAFESKLKESEAKNRELLEEMQSLRKRMEEKFRADTGLKLPDFQDSIFEYFNTAPLAHDLTFRTSSASDQETQASKMDLSPSVSVATSTEQQEDMARPQQRPSPVPLPSTQALAMAGPKPKAHQFSIKSFPSPTQCSHCTSLMVGLIRQGYACEVCAFSCHVSCKDSAPQVCPIPPEQSKRPLGVDVQRGIGTAYKGYVKVPKPTGVKKGWQRAYAVVCDCKLFLYDLPEGKSTQPGVVASQVLDLRDEEFAVSSVLASDVIHATRRDIPCIFRVTASLLGSPSKTSSLLILTENENEKRKWVGILEGLQAILHKNRLKSQVVHVAQEAYDSSLPLIKAVLAAAIVDGDRIAVGLEEGLYVIELTRDVIVRAADCKKVYQIELAPKEKIAILLCGRNHHVHLYPWSSFDGAEASNFDIKLPETKGCQLIATGTLRKSSSTCLFVAVKRLILCYEIQRTKPFHRKFSELVAPGHVQWMAVFKDRLCVGYPSGFSLLSIQGDGPPLDLVNPTDPSLAFLSQQSFDALCAVELKSEEYLLCFSHMGLYVDPQGRRSRMQELMWPAAPVACSCSPTHVTVYSEYGVDVFDVRTMEWVQTIGLRRIRPLNSDGSLNLLGCEPPRLIYFKNKFSGTILNVPDTSDNSKKQMLRTRSKRRFVFKVPEEERLQQRREMLRDPELRSKMISNPTNFNHVAHMGPGDGMQVLMDLPLSAAPTVQEEKQGPTPAGLPRQPPSRSKPYVSWPSSGGSEPGVPVPLRSMSDPDQDFDKEPDSDSTKHSTPSNSSNPSGPPSPNSPHRSQLPMEGLDQPSCDA.

One can recognise a Protein kinase domain in the interval 76-342 (FEIIKVIGRG…IEDFKKHAFF (267 aa)). Residues 82 to 90 (IGRGAFGEV) and lysine 105 each bind ATP. Aspartate 200 acts as the Proton acceptor in catalysis. 2 positions are modified to phosphoserine; by autocatalysis: serine 221 and serine 233. Threonine 239 carries the post-translational modification Phosphothreonine; by autocatalysis. The region spanning 343 to 413 (EGLNWENIRN…TTESCFSDRG (71 aa)) is the AGC-kinase C-terminal domain. Threonine 423 is modified (phosphothreonine). The stretch at 434–649 (LENSLQIEAY…ASKERKLREH (216 aa)) forms a coiled coil. Residue arginine 671 is modified to Omega-N-methylarginine. Coiled coils occupy residues 681–815 (QEIS…AHWE) and 878–939 (ELQS…FRAD). Phosphoserine is present on serine 927. At tyrosine 954 the chain carries Phosphotyrosine. Over residues 971–994 (ASDQETQASKMDLSPSVSVATSTE) the composition is skewed to polar residues. The tract at residues 971–1022 (ASDQETQASKMDLSPSVSVATSTEQQEDMARPQQRPSPVPLPSTQALAMAGP) is disordered. The Phorbol-ester/DAG-type zinc finger occupies 1026-1076 (AHQFSIKSFPSPTQCSHCTSLMVGLIRQGYACEVCAFSCHVSCKDSAPQVC). The region spanning 1096–1215 (GTAYKGYVKV…WVGILEGLQA (120 aa)) is the PH domain. The CNH domain maps to 1241-1515 (IKAVLAAAIV…RPLNSDGSLN (275 aa)). A CRIB domain is found at 1585-1598 (ISNPTNFNHVAHMG). The tract at residues 1616–1713 (TVQEEKQGPT…EGLDQPSCDA (98 aa)) is disordered. Residues 1666–1677 (DFDKEPDSDSTK) are compositionally biased toward basic and acidic residues. Serine 1682, serine 1684, serine 1688, serine 1692, and serine 1695 each carry phosphoserine.

It belongs to the protein kinase superfamily. AGC Ser/Thr protein kinase family. DMPK subfamily. In terms of assembly, homodimer and homotetramer via the coiled coil regions. Interacts tightly with GTP-bound but not GDP-bound CDC42. Interacts with TJP1; this interaction requires the presence of catalytically active CDC42. Forms a tripartite complex with MYO18A and LURAP1 with the latter acting as an adapter connecting CDC42BPB and MYO18A. LURAP1 binding results in activation of CDC42BPB by abolition of its negative autoregulation. Interacts with STRIP1, STRN3 and SIKE1. Interacts with CPNE4 (via VWFA domain). Interacts with LURAP1. Interacts (via AGC-kinase C-terminal domain) with FAM89B/LRAP25 (via LRR repeat). Forms a tripartite complex with FAM89B/LRAP25 and LIMK1. The cofactor is Mg(2+). In terms of processing, proteolytically cleaved by caspases upon apoptosis induction.

The protein resides in the cytoplasm. It localises to the cell membrane. Its subcellular location is the cell junction. The protein localises to the cell projection. It is found in the lamellipodium. The enzyme catalyses L-seryl-[protein] + ATP = O-phospho-L-seryl-[protein] + ADP + H(+). It catalyses the reaction L-threonyl-[protein] + ATP = O-phospho-L-threonyl-[protein] + ADP + H(+). Its activity is regulated as follows. Maintained in an inactive, closed conformation by an interaction between the kinase domain and the negative autoregulatory C-terminal coiled-coil region. Agonist binding to the phorbol ester binding site disrupts this, releasing the kinase domain to allow N-terminus-mediated dimerization and kinase activation by transautophosphorylation. Inhibited by chelerythrine chloride. In terms of biological role, serine/threonine-protein kinase which is an important downstream effector of CDC42 and plays a role in the regulation of cytoskeleton reorganization and cell migration. Regulates actin cytoskeletal reorganization via phosphorylation of PPP1R12C and MYL9/MLC2. In concert with MYO18A and LURAP1, is involved in modulating lamellar actomyosin retrograde flow that is crucial to cell protrusion and migration. Phosphorylates PPP1R12A. In concert with FAM89B/LRAP25 mediates the targeting of LIMK1 to the lamellipodium resulting in its activation and subsequent phosphorylation of CFL1 which is important for lamellipodial F-actin regulation. This Mus musculus (Mouse) protein is Serine/threonine-protein kinase MRCK beta.